Consider the following 115-residue polypeptide: Large ribosomal subunit protein bL20 (115 aa).

The protein belongs to the bacterial ribosomal protein bL20 family.

In terms of biological role, binds directly to 23S ribosomal RNA and is necessary for the in vitro assembly process of the 50S ribosomal subunit. It is not involved in the protein synthesizing functions of that subunit. This chain is Large ribosomal subunit protein bL20, found in Parasynechococcus marenigrum (strain WH8102).